We begin with the raw amino-acid sequence, 217 residues long: Ribulose-phosphate 3-epimerase (217 aa).

Residue S6 participates in substrate binding. Residues H29, D31, and H62 each contribute to the a divalent metal cation site. D31 acts as the Proton acceptor in catalysis. Residues H62, 138 to 141, 171 to 173, and 193 to 194 contribute to the substrate site; these read GFGG, DGG, and GS. Position 171 (D171) interacts with a divalent metal cation. The Proton donor role is filled by D171.

This sequence belongs to the ribulose-phosphate 3-epimerase family. A divalent metal cation is required as a cofactor.

It carries out the reaction D-ribulose 5-phosphate = D-xylulose 5-phosphate. It functions in the pathway carbohydrate degradation. Its function is as follows. Catalyzes the reversible epimerization of D-ribulose 5-phosphate to D-xylulose 5-phosphate. This Helicobacter pylori (strain J99 / ATCC 700824) (Campylobacter pylori J99) protein is Ribulose-phosphate 3-epimerase.